The chain runs to 456 residues: Bifunctional protein GlmU (456 aa).

Residues 1–231 are pyrophosphorylase; sequence MERTCLAIIL…EEELTGCNTR (231 aa). UDP-N-acetyl-alpha-D-glucosamine-binding positions include 10–13, Lys-24, Gln-77, and 82–83; these read LAAG and GT. Position 107 (Asp-107) interacts with Mg(2+). Residues Gly-143, Glu-157, Asn-172, and Asn-229 each coordinate UDP-N-acetyl-alpha-D-glucosamine. Position 229 (Asn-229) interacts with Mg(2+). Positions 232 to 252 are linker; the sequence is AELAYIERLWQQRRRQELMLA. The N-acetyltransferase stretch occupies residues 253-456; it reads GVSMVAPETV…AARKKVKAAE (204 aa). UDP-N-acetyl-alpha-D-glucosamine contacts are provided by Arg-318 and Lys-336. The active-site Proton acceptor is the His-348. The UDP-N-acetyl-alpha-D-glucosamine site is built by Tyr-351 and Asn-362. Acetyl-CoA is bound by residues Ala-365, 371–372, Ser-390, Ser-408, and Arg-425; that span reads NY.

It in the N-terminal section; belongs to the N-acetylglucosamine-1-phosphate uridyltransferase family. This sequence in the C-terminal section; belongs to the transferase hexapeptide repeat family. In terms of assembly, homotrimer. Mg(2+) is required as a cofactor.

Its subcellular location is the cytoplasm. The enzyme catalyses alpha-D-glucosamine 1-phosphate + acetyl-CoA = N-acetyl-alpha-D-glucosamine 1-phosphate + CoA + H(+). It catalyses the reaction N-acetyl-alpha-D-glucosamine 1-phosphate + UTP + H(+) = UDP-N-acetyl-alpha-D-glucosamine + diphosphate. Its pathway is nucleotide-sugar biosynthesis; UDP-N-acetyl-alpha-D-glucosamine biosynthesis; N-acetyl-alpha-D-glucosamine 1-phosphate from alpha-D-glucosamine 6-phosphate (route II): step 2/2. The protein operates within nucleotide-sugar biosynthesis; UDP-N-acetyl-alpha-D-glucosamine biosynthesis; UDP-N-acetyl-alpha-D-glucosamine from N-acetyl-alpha-D-glucosamine 1-phosphate: step 1/1. It functions in the pathway bacterial outer membrane biogenesis; LPS lipid A biosynthesis. Its function is as follows. Catalyzes the last two sequential reactions in the de novo biosynthetic pathway for UDP-N-acetylglucosamine (UDP-GlcNAc). The C-terminal domain catalyzes the transfer of acetyl group from acetyl coenzyme A to glucosamine-1-phosphate (GlcN-1-P) to produce N-acetylglucosamine-1-phosphate (GlcNAc-1-P), which is converted into UDP-GlcNAc by the transfer of uridine 5-monophosphate (from uridine 5-triphosphate), a reaction catalyzed by the N-terminal domain. This chain is Bifunctional protein GlmU, found in Sinorhizobium fredii (strain NBRC 101917 / NGR234).